Here is a 348-residue protein sequence, read N- to C-terminus: Rhodopsin (348 aa).

N-acetylmethionine is present on M1. Over 1 to 36 (MNGTEGPNFYVPFSNKTGVVRSPFEYPQYYLAEPWQ) the chain is Extracellular. N2 and N15 each carry an N-linked (GlcNAc...) asparagine glycan. Residues 37 to 61 (FSMLAAYMFLLIVLGFPINFLTLYV) form a helical membrane-spanning segment. Residues 62–73 (TVQHKKLRTPLN) lie on the Cytoplasmic side of the membrane. Residues 74–96 (YILLNLAVADLFMVFGGFTTTLY) form a helical membrane-spanning segment. At 97-110 (TSLHGYFVFGPTGC) the chain is on the extracellular side. C110 and C187 form a disulfide bridge. The chain crosses the membrane as a helical span at residues 111 to 133 (NLEGFFATLGGEIALWSLVVLAI). Positions 134–136 (ERY) match the 'Ionic lock' involved in activated form stabilization motif. Topologically, residues 134–152 (ERYVVVCKPMSNFRFGENH) are cytoplasmic. Residues 153–173 (AIMGVAFTWVMALACAAPPLV) form a helical membrane-spanning segment. At 174–202 (GWSRYIPEGMQCSCGIDYYTLKPEVNNES) the chain is on the extracellular side. Residue E201 participates in Zn(2+) binding. The chain crosses the membrane as a helical span at residues 203–224 (FVIYMFVVHFTIPMIVIFFCYG). At 225 to 252 (QLVFTVKEAAAQQQESATTQKAEKEVTR) the chain is on the cytoplasmic side. A helical membrane pass occupies residues 253 to 274 (MVIIMVIAFLICWVPYASVAFY). Residues 275–286 (IFTHQGSNFGPI) are Extracellular-facing. Zn(2+) is bound at residue Q279. A helical transmembrane segment spans residues 287–308 (FMTLPAFFAKSSSIYNPVIYIM). K296 is subject to N6-(retinylidene)lysine. Topologically, residues 309–348 (MNKQFRNCMLTTLCCGKNPLGDDEASTTGSKTETSQVAPA) are cytoplasmic. S-palmitoyl cysteine attachment occurs at residues C322 and C323. Residues 330–348 (DDEASTTGSKTETSQVAPA) form an interaction with SAG region. S334 carries the phosphoserine modification. 2 positions are modified to phosphothreonine: T335 and T336. Phosphoserine is present on S338. 2 positions are modified to phosphothreonine: T340 and T342. S343 bears the Phosphoserine mark.

The protein belongs to the G-protein coupled receptor 1 family. Opsin subfamily. As to quaternary structure, homodimer. May form a complex composed of RHO, GRK1 and RCVRN in a Ca(2+)-dependent manner; RCVRN prevents the interaction between GRK1 and RHO. Interacts with GRK1. Interacts (phosphorylated form) with SAG. Interacts with GNAT1. Interacts with GNAT3. SAG and G-proteins compete for a common binding site. Interacts with PRCD; the interaction promotes PRCD stability. Forms a complex with ASAP1 and ARF4. Forms a complex with ASAP1, RAB11A, Rabin8/RAB3IP, ARF4 and RAB11FIP3; the complex regulates Golgi-to-cilia rhodopsin/RHO transport in photoreceptors. Phosphorylated on some or all of the serine and threonine residues present in the C-terminal region. In terms of processing, contains one covalently linked retinal chromophore. Upon light absorption, the covalently bound 11-cis-retinal is converted to all-trans-retinal. After hydrolysis of the Schiff base and release of the covalently bound all-trans-retinal, active rhodopsin is regenerated by binding of a fresh molecule of 11-cis-retinal.

Its subcellular location is the membrane. It is found in the cell projection. The protein localises to the cilium. The protein resides in the photoreceptor outer segment. In terms of biological role, photoreceptor required for image-forming vision at low light intensity. Required for photoreceptor cell viability after birth. Light-induced isomerization of 11-cis to all-trans retinal triggers a conformational change that activates signaling via G-proteins. Subsequent receptor phosphorylation mediates displacement of the bound G-protein alpha subunit by the arrestin SAG and terminates signaling. This Felis catus (Cat) protein is Rhodopsin (RHO).